The chain runs to 128 residues: MAIPQIKTQVGTSKQAGDAAEESALRHLQQAGLRLLQRNYRTPGRGGGEIDLIMRAPDGTTVFVEVRQRANASHGGAAASISVTKQRRIIFAARHYLMRLREPPPCRFDVVTLECGVIQWLQAAFEAC.

A compositionally biased stretch (polar residues) spans 1–15 (MAIPQIKTQVGTSKQ). A disordered region spans residues 1-20 (MAIPQIKTQVGTSKQAGDAA).

It belongs to the UPF0102 family.

This is UPF0102 protein Rfer_3873 from Albidiferax ferrireducens (strain ATCC BAA-621 / DSM 15236 / T118) (Rhodoferax ferrireducens).